We begin with the raw amino-acid sequence, 266 residues long: MAELHWTRQWRGWEGVAAVRWATAAARAADPPALALRGRHPADTAASPPPPRTAGARARTSGADGRRRGRPLGPAQRGRYLLRDTRQTLGREPKSFLCRLCCQEDPELDSDKDETGAYLIDRDPTYFGPILNYLRHGKLIITKELGEEGVLEEAEFYNIASLVRLVKERIRDNENRTSQGPVKHVYRVLQCQEEELTQMVSTMSDGWKFEQLISIGSSYNYGNQDQAEFLCVVSRELNNSTNGIVIEPSEKPRFFRKRALECERTV.

Position 2 is an N-acetylalanine (Ala-2). The interval 38–79 (GRHPADTAASPPPPRTAGARARTSGADGRRRGRPLGPAQRGR) is disordered. A compositionally biased stretch (low complexity) spans 53-63 (TAGARARTSGA). A BTB domain is found at 76–174 (QRGRYLLRDT…LVKERIRDNE (99 aa)).

This is BTB/POZ domain-containing protein KCTD2 (Kctd2) from Mus musculus (Mouse).